Reading from the N-terminus, the 457-residue chain is MSKRYAVVLAAGQGTRMKSKLYKVLHPVCGKPMVEHVVDQISTLDVDKVVTIVGHGAEKVQEHLAGKSEFVKQDEQLGTAHAVLQAKSELAGKDGVTLVVCGDTPLIEASTMEALLKYHHEKRAKATILTTVIEDPTGYGRIIRDDLGIVEKIVEHKDATEKEQRISEINTGTYCFDNKALFEALENVSNDNVQGEYYLPDVIKILKDADEVVAAYKMESFEESLGVNDRIALAEASKLMQRRINENHMRNGVTLVNPENTYIDIDVKIGQDTVIEPGVMLRGKTVIGDDCVVTSGSEIVSSVIGERVHVRNSSIFESKVGDDVQIGPYAHLRPESDIHNHVKIGNYVETKKAVVGEGTKLPHFIYMGDAEIGKNVNVGCGSIAVNYDGKNKAKTIIGDNVFVGCNSNLIAPVKVGDRAFIAAGSTITKDVPEDALGIARAKQDNKLGYAKHLNHGK.

The segment at 1–230 (MSKRYAVVLA…FEESLGVNDR (230 aa)) is pyrophosphorylase. UDP-N-acetyl-alpha-D-glucosamine-binding positions include 9–12 (LAAG), K23, Q73, and 78–79 (GT). Residue D103 coordinates Mg(2+). UDP-N-acetyl-alpha-D-glucosamine-binding residues include G140, E155, N170, and N228. Residue N228 participates in Mg(2+) binding. The tract at residues 231–251 (IALAEASKLMQRRINENHMRN) is linker. The tract at residues 252–457 (GVTLVNPENT…GYAKHLNHGK (206 aa)) is N-acetyltransferase. Residues R333 and K351 each coordinate UDP-N-acetyl-alpha-D-glucosamine. H363 (proton acceptor) is an active-site residue. Residues Y366 and N377 each contribute to the UDP-N-acetyl-alpha-D-glucosamine site. Residues 386–387 (NY), A423, and R440 each bind acetyl-CoA.

This sequence in the N-terminal section; belongs to the N-acetylglucosamine-1-phosphate uridyltransferase family. In the C-terminal section; belongs to the transferase hexapeptide repeat family. As to quaternary structure, homotrimer. It depends on Mg(2+) as a cofactor.

It is found in the cytoplasm. It catalyses the reaction alpha-D-glucosamine 1-phosphate + acetyl-CoA = N-acetyl-alpha-D-glucosamine 1-phosphate + CoA + H(+). It carries out the reaction N-acetyl-alpha-D-glucosamine 1-phosphate + UTP + H(+) = UDP-N-acetyl-alpha-D-glucosamine + diphosphate. Its pathway is nucleotide-sugar biosynthesis; UDP-N-acetyl-alpha-D-glucosamine biosynthesis; N-acetyl-alpha-D-glucosamine 1-phosphate from alpha-D-glucosamine 6-phosphate (route II): step 2/2. The protein operates within nucleotide-sugar biosynthesis; UDP-N-acetyl-alpha-D-glucosamine biosynthesis; UDP-N-acetyl-alpha-D-glucosamine from N-acetyl-alpha-D-glucosamine 1-phosphate: step 1/1. It participates in bacterial outer membrane biogenesis; LPS lipid A biosynthesis. In terms of biological role, catalyzes the last two sequential reactions in the de novo biosynthetic pathway for UDP-N-acetylglucosamine (UDP-GlcNAc). The C-terminal domain catalyzes the transfer of acetyl group from acetyl coenzyme A to glucosamine-1-phosphate (GlcN-1-P) to produce N-acetylglucosamine-1-phosphate (GlcNAc-1-P), which is converted into UDP-GlcNAc by the transfer of uridine 5-monophosphate (from uridine 5-triphosphate), a reaction catalyzed by the N-terminal domain. This chain is Bifunctional protein GlmU, found in Listeria innocua serovar 6a (strain ATCC BAA-680 / CLIP 11262).